We begin with the raw amino-acid sequence, 247 residues long: NAD-dependent protein deacetylase (247 aa).

Residues Met1 to Lys244 form the Deacetylase sirtuin-type domain. NAD(+) is bound by residues Ala22, Thr26, Phe33, Arg34, Gln98, Ile100, Asp101, and His116. Phe33 contributes to the nicotinamide binding site. Ile100 and Asp101 together coordinate nicotinamide. The Proton acceptor role is filled by His116. Residues Cys124, Cys127, Cys149, and Cys151 each contribute to the Zn(2+) site. Ser187, Ser188, Asn212, and Val230 together coordinate NAD(+).

This sequence belongs to the sirtuin family. Class U subfamily. In terms of assembly, monomer. Zn(2+) serves as cofactor.

Its subcellular location is the cytoplasm. The catalysed reaction is N(6)-acetyl-L-lysyl-[protein] + NAD(+) + H2O = 2''-O-acetyl-ADP-D-ribose + nicotinamide + L-lysyl-[protein]. Functionally, NAD-dependent protein deacetylase which modulates the activities of several enzymes which are inactive in their acetylated form. Deacetylates the N-terminal lysine residue of albA1, the major archaeal DNA compaction protein and that, in turn, increases albA1's DNA binding affinity, thereby repressing transcription. The polypeptide is NAD-dependent protein deacetylase (Saccharolobus solfataricus (strain ATCC 35092 / DSM 1617 / JCM 11322 / P2) (Sulfolobus solfataricus)).